We begin with the raw amino-acid sequence, 474 residues long: ATP synthase subunit beta 2 (474 aa).

151-158 contributes to the ATP binding site; the sequence is GGAGVGKT.

The protein belongs to the ATPase alpha/beta chains family. In terms of assembly, F-type ATPases have 2 components, CF(1) - the catalytic core - and CF(0) - the membrane proton channel. CF(1) has five subunits: alpha(3), beta(3), gamma(1), delta(1), epsilon(1). CF(0) has four main subunits: a(1), b(1), b'(1) and c(9-12).

It localises to the cell inner membrane. The catalysed reaction is ATP + H2O + 4 H(+)(in) = ADP + phosphate + 5 H(+)(out). In terms of biological role, produces ATP from ADP in the presence of a proton gradient across the membrane. The catalytic sites are hosted primarily by the beta subunits. In Dinoroseobacter shibae (strain DSM 16493 / NCIMB 14021 / DFL 12), this protein is ATP synthase subunit beta 2.